Reading from the N-terminus, the 471-residue chain is Ribulose bisphosphate carboxylase large chain 2 (471 aa).

Positions 116 and 166 each coordinate substrate. Catalysis depends on lysine 168, which acts as the Proton acceptor. Lysine 170 provides a ligand contact to substrate. Mg(2+)-binding residues include lysine 194, aspartate 196, and glutamate 197. Lysine 194 carries the N6-carboxylysine modification. The Proton acceptor role is filled by histidine 287. Arginine 288, histidine 320, and serine 372 together coordinate substrate.

This sequence belongs to the RuBisCO large chain family. Type I subfamily. As to quaternary structure, heterohexadecamer of 8 large chains and 8 small chains. Forms a CsoS2-CsoS1-RuBisCO complex. It depends on Mg(2+) as a cofactor.

The protein resides in the carboxysome. It catalyses the reaction 2 (2R)-3-phosphoglycerate + 2 H(+) = D-ribulose 1,5-bisphosphate + CO2 + H2O. The enzyme catalyses D-ribulose 1,5-bisphosphate + O2 = 2-phosphoglycolate + (2R)-3-phosphoglycerate + 2 H(+). RuBisCO catalyzes two reactions: the carboxylation of D-ribulose 1,5-bisphosphate, the primary event in carbon dioxide fixation, as well as the oxidative fragmentation of the pentose substrate. Both reactions occur simultaneously and in competition at the same active site. Replacing the endogenous type I ccbLS genes in H.neapolitanus with this carboxysomally targeted enzyme reconstitutes RuBisCO with about 25% of normal activity; the active enzyme is targeted to carboxysomes. The chain is Ribulose bisphosphate carboxylase large chain 2 from Hydrogenovibrio crunogenus (strain DSM 25203 / XCL-2) (Thiomicrospira crunogena).